Here is a 131-residue protein sequence, read N- to C-terminus: Phosphoribosyl-AMP cyclohydrolase (131 aa).

Asp-78 contacts Mg(2+). Cys-79 contacts Zn(2+). The Mg(2+) site is built by Asp-80 and Asp-82. Residues Cys-96 and Cys-103 each contribute to the Zn(2+) site.

This sequence belongs to the PRA-CH family. In terms of assembly, homodimer. Mg(2+) serves as cofactor. Zn(2+) is required as a cofactor.

It is found in the cytoplasm. It carries out the reaction 1-(5-phospho-beta-D-ribosyl)-5'-AMP + H2O = 1-(5-phospho-beta-D-ribosyl)-5-[(5-phospho-beta-D-ribosylamino)methylideneamino]imidazole-4-carboxamide. It participates in amino-acid biosynthesis; L-histidine biosynthesis; L-histidine from 5-phospho-alpha-D-ribose 1-diphosphate: step 3/9. Functionally, catalyzes the hydrolysis of the adenine ring of phosphoribosyl-AMP. The sequence is that of Phosphoribosyl-AMP cyclohydrolase from Neisseria meningitidis serogroup A / serotype 4A (strain DSM 15465 / Z2491).